Consider the following 252-residue polypeptide: Phosphate import ATP-binding protein PstB 1 (252 aa).

The ABC transporter domain maps to 6 to 247; that stretch reads ISSKDLHLYY…PKEKQTEDYI (242 aa). 38-45 is an ATP binding site; it reads GPSGCGKS.

The protein belongs to the ABC transporter superfamily. Phosphate importer (TC 3.A.1.7) family. As to quaternary structure, the complex is composed of two ATP-binding proteins (PstB), two transmembrane proteins (PstC and PstA) and a solute-binding protein (PstS).

The protein localises to the cell membrane. It catalyses the reaction phosphate(out) + ATP + H2O = ADP + 2 phosphate(in) + H(+). Part of the ABC transporter complex PstSACB involved in phosphate import. Responsible for energy coupling to the transport system. The protein is Phosphate import ATP-binding protein PstB 1 of Enterococcus faecalis (strain ATCC 700802 / V583).